The sequence spans 253 residues: Indole-3-glycerol phosphate synthase (253 aa).

Belongs to the TrpC family.

The enzyme catalyses 1-(2-carboxyphenylamino)-1-deoxy-D-ribulose 5-phosphate + H(+) = (1S,2R)-1-C-(indol-3-yl)glycerol 3-phosphate + CO2 + H2O. It functions in the pathway amino-acid biosynthesis; L-tryptophan biosynthesis; L-tryptophan from chorismate: step 4/5. The protein is Indole-3-glycerol phosphate synthase of Bacillus thuringiensis (strain Al Hakam).